Consider the following 560-residue polypeptide: Alpha-keto-acid decarboxylase (560 aa).

Glu61 contributes to the thiamine diphosphate binding site. Residues Thr396–Val478 form a thiamine pyrophosphate binding region. Mg(2+)-binding residues include Asp446, Asn473, and Gly475.

Belongs to the TPP enzyme family. Requires a metal cation as cofactor. It depends on thiamine diphosphate as a cofactor.

Its function is as follows. Decarboxylates branched-chain and aromatic alpha-keto acids to aldehydes. This Mycobacterium tuberculosis (strain CDC 1551 / Oshkosh) protein is Alpha-keto-acid decarboxylase (kdc).